A 240-amino-acid polypeptide reads, in one-letter code: Phosphoribosylaminoimidazole-succinocarboxamide synthase (240 aa).

Belongs to the SAICAR synthetase family.

It carries out the reaction 5-amino-1-(5-phospho-D-ribosyl)imidazole-4-carboxylate + L-aspartate + ATP = (2S)-2-[5-amino-1-(5-phospho-beta-D-ribosyl)imidazole-4-carboxamido]succinate + ADP + phosphate + 2 H(+). It participates in purine metabolism; IMP biosynthesis via de novo pathway; 5-amino-1-(5-phospho-D-ribosyl)imidazole-4-carboxamide from 5-amino-1-(5-phospho-D-ribosyl)imidazole-4-carboxylate: step 1/2. This chain is Phosphoribosylaminoimidazole-succinocarboxamide synthase, found in Wolbachia pipientis wMel.